The chain runs to 342 residues: Cyclin-dependent kinase-like 4 (342 aa).

The Protein kinase domain occupies 4 to 286 (YEKLAKIGEG…CAQLLDSAYF (283 aa)). Residues 10-18 (IGEGSYGVV) and lysine 33 each bind ATP. The [NKR]KIAxRE signature appears at 45-51 (RKIALRE). The Proton acceptor role is filled by aspartate 126. The interval 295–328 (KRKARSEGRSRRRQQNQLLPLIPGSHISPTPDGR) is disordered.

It belongs to the protein kinase superfamily. CMGC Ser/Thr protein kinase family. CDC2/CDKX subfamily.

It is found in the cytoplasm. The catalysed reaction is L-seryl-[protein] + ATP = O-phospho-L-seryl-[protein] + ADP + H(+). It catalyses the reaction L-threonyl-[protein] + ATP = O-phospho-L-threonyl-[protein] + ADP + H(+). This Mus musculus (Mouse) protein is Cyclin-dependent kinase-like 4 (Cdkl4).